Consider the following 594-residue polypeptide: Putative phospholipase B-like 2 (594 aa).

The first 46 residues, 1–46 (MAAPVDGSSGGWAARALRRALALTSLTTLALLASLTGLLLSGPAGA), serve as a signal peptide directing secretion. Residues asparagine 93 and asparagine 115 are each glycosylated (N-linked (GlcNAc...) asparagine). Cysteine 147 and cysteine 157 are disulfide-bonded. N-linked (GlcNAc...) asparagine glycans are attached at residues asparagine 236 and asparagine 441. An intrachain disulfide couples cysteine 497 to cysteine 500. Asparagine 520 carries N-linked (GlcNAc...) asparagine glycosylation.

The protein belongs to the phospholipase B-like family. In terms of assembly, interacts with IGF2R. Post-translationally, the p76 protein is synthesized as a 76 kDa precursor which is then processed into a N-terminal 28 kDa form and a C-terminal 40 kDa form. The C-terminal peptide is further processed into a 15 kDa form. In terms of processing, glycosylated; contains mannose 6-phosphate sugars. Present at highest levels in spleen, lung and brain (at protein level).

It localises to the lysosome lumen. Its function is as follows. Putative phospholipase. This is Putative phospholipase B-like 2 (Plbd2) from Mus musculus (Mouse).